Here is a 401-residue protein sequence, read N- to C-terminus: S-adenosylmethionine synthase (401 aa).

136–141 (GQGSVD) is an ATP binding site.

The protein belongs to the AdoMet synthase 2 family. It depends on Mg(2+) as a cofactor.

The catalysed reaction is L-methionine + ATP + H2O = S-adenosyl-L-methionine + phosphate + diphosphate. The protein operates within amino-acid biosynthesis; S-adenosyl-L-methionine biosynthesis; S-adenosyl-L-methionine from L-methionine: step 1/1. Functionally, catalyzes the formation of S-adenosylmethionine from methionine and ATP. The polypeptide is S-adenosylmethionine synthase (mat) (Pyrococcus abyssi (strain GE5 / Orsay)).